Reading from the N-terminus, the 393-residue chain is MVTIGTPNTPSATRILLLGSGELGREVAIEAMRLGVEVIAVDRYPNAPAMQVAHRSHVVSMLDGAALRRIIEAERPHCIVPEIEAIATETLLELEKEGFRVVPTARAARLTMDREGIRRLAAEELGLPTSPYRFAETEAEYREAVAAVGLPCVVKPVMSSSGKGQSTVRTEADVMKAWEYAQTGGRAGGGKVIVEGFVDFDYEITQLTVRHAGGTTFCDPIGHLQKDGDYRESWQPHPMSQAALAESRRMAEAVTGALGGWGIFGVELFIKGDKVYFSEVSPRPHDTGLVTLISQNLSEFALHARAILGLPVPALRQNGPAASCVVLAEGDSMSPGYHGIEAALAEPDTGLCLFGKPEVHGKRRMGVALALGASIEEARAKARRAAAAVQVEL.

Residues 22 to 23 and Glu82 contribute to the N(1)-(5-phospho-beta-D-ribosyl)glycinamide site; that span reads EL. ATP is bound by residues Arg114, Lys155, 160–165, 195–198, and Glu203; these read SSGKGQ and EGFV. In terms of domain architecture, ATP-grasp spans 119–308; it reads RLAAEELGLP…EFALHARAIL (190 aa). Residues Glu267 and Glu279 each contribute to the Mg(2+) site. N(1)-(5-phospho-beta-D-ribosyl)glycinamide-binding positions include Asp286, Lys356, and 363–364; that span reads RR.

Belongs to the PurK/PurT family. In terms of assembly, homodimer.

The catalysed reaction is N(1)-(5-phospho-beta-D-ribosyl)glycinamide + formate + ATP = N(2)-formyl-N(1)-(5-phospho-beta-D-ribosyl)glycinamide + ADP + phosphate + H(+). The protein operates within purine metabolism; IMP biosynthesis via de novo pathway; N(2)-formyl-N(1)-(5-phospho-D-ribosyl)glycinamide from N(1)-(5-phospho-D-ribosyl)glycinamide (formate route): step 1/1. Involved in the de novo purine biosynthesis. Catalyzes the transfer of formate to 5-phospho-ribosyl-glycinamide (GAR), producing 5-phospho-ribosyl-N-formylglycinamide (FGAR). Formate is provided by PurU via hydrolysis of 10-formyl-tetrahydrofolate. The protein is Formate-dependent phosphoribosylglycinamide formyltransferase of Nitratidesulfovibrio vulgaris (strain DSM 19637 / Miyazaki F) (Desulfovibrio vulgaris).